Here is an 898-residue protein sequence, read N- to C-terminus: Sodium/hydrogen exchanger 5 (898 aa).

At 1-3 (MLR) the chain is on the cytoplasmic side. Residues 4–24 (VALLLLPGLPLAGVGATEEPT) form a helical membrane-spanning segment. Residues 25-47 (QEPGPLGEPPGLALFRWQWHEVE) lie on the Extracellular side of the membrane. The chain crosses the membrane as a helical span at residues 48–68 (APYLVALWILVASLAKIVFHL). Topologically, residues 69–75 (SRKVTSL) are cytoplasmic. Residues 76–96 (VPESCLLILLGLALGGIVLAV) form a helical membrane-spanning segment. At 97-136 (AKKAEYQLEPGTFFLFLLPPIVLDSGYFMPSRLFFDNLGA) the chain is on the extracellular side. The helical transmembrane segment at 137-157 (ILTYAVVGTLWNAFTTGVALW) threads the bilayer. The Cytoplasmic portion of the chain corresponds to 158–175 (GLQQAGLVAPRVQAGLLD). A helical transmembrane segment spans residues 176 to 196 (FLLFGSLISAVDPVAVLAVFE). Over 197-202 (EVHVNE) the chain is Extracellular. N-linked (GlcNAc...) asparagine glycosylation is present at asparagine 201. The helical transmembrane segment at 203 to 223 (TLFIIVFGESLLNDAVTVVLY) threads the bilayer. Over 224–248 (KVCNSFVEMGSANVQATDYLKGVAS) the chain is Cytoplasmic. The chain crosses the membrane as a helical span at residues 249 to 269 (LFVVSLGGAAVGLVFAFLLAL). Residues 270–278 (TTRFTKRVR) lie on the Extracellular side of the membrane. Residues 279–299 (IIEPLLVFLLAYAAYLTAEMA) form a helical membrane-spanning segment. Residues 300–333 (SLSAILAVTMCGLGCKKYVEANISHKSRTAVKYT) are Cytoplasmic-facing. The helical transmembrane segment at 334–354 (MKTLASSAETVIFMLLGISAV) threads the bilayer. The Extracellular segment spans residues 355 to 362 (DSSKWAWD). The helical transmembrane segment at 363-383 (SGLVLGTLFFILFFRALGVVL) threads the bilayer. The Cytoplasmic portion of the chain corresponds to 384–400 (QTWVLNQFRLVPLDKID). The chain crosses the membrane as a helical span at residues 401 to 421 (QVVMSYGGLRGAVAFALVILL). The Extracellular portion of the chain corresponds to 422–430 (DRTKVPAKD). A helical transmembrane segment spans residues 431–451 (YFVATTIVVVFFTVIVQGLTI). At 452 to 898 (KPLVKWLRVK…CIQFNRGGRL (447 aa)) the chain is on the cytoplasmic side. Disordered regions lie at residues 660–692 (TKSK…RDLG) and 801–888 (ESLA…NSHW). Residues 662-674 (SKPRPRKTGHKKK) are compositionally biased toward basic residues. Residues 856-867 (ESSADIPQQQEL) show a composition bias toward polar residues.

It belongs to the monovalent cation:proton antiporter 1 (CPA1) transporter (TC 2.A.36) family. As to quaternary structure, interacts with CHP1 and CHP2. Interacts with ARRB2; facilitates the endocytosis of SLC9A5 from the plasma membrane. Interacts with RACK1; this interaction positively regulates SLC9A5 activity and promotes SLC9A5 localization to focal adhesions. Interacts with SCAMP2; this interaction regulates SLC9A5 cell-surface targeting and SLC9A5 activity. Phosphorylated by PRKAA2; promotes its accumulation at the cell surface. Phosphorylated by CSNK2A1 in a manner favoring its beta-arrestin binding and endocytosis. In terms of tissue distribution, highly expressed in brain. Strongly expressed in the dentate gyrus.

It is found in the cell membrane. The protein localises to the recycling endosome membrane. The protein resides in the cell projection. Its subcellular location is the dendritic spine membrane. It localises to the synaptic cell membrane. It is found in the cell junction. The protein localises to the focal adhesion. The catalysed reaction is Na(+)(in) + H(+)(out) = Na(+)(out) + H(+)(in). In terms of biological role, plasma membrane Na(+)/H(+) antiporter. Mediates the electroneutral exchange of intracellular H(+) ions for extracellular Na(+) in 1:1 stoichiometry. Responsible for regulating intracellular pH homeostasis, in particular in neural tissues. Acts as a negative regulator of dendritic spine growth. Plays a role in postsynaptic remodeling and signaling. Can also contribute to organellar pH regulation, with consequences for receptor tyrosine kinase trafficking. The protein is Sodium/hydrogen exchanger 5 (Slc9a5) of Rattus norvegicus (Rat).